A 623-amino-acid polypeptide reads, in one-letter code: Cilia- and flagella-associated protein 52 (623 aa).

WD repeat units lie at residues 65 to 109 (GHGN…LMAR), 112 to 153 (LHKG…AICG), 159 to 198 (LNVGNATTVIFSKCRDEMFVTAGNGTIRVWELDLPNRKIW), 291 to 330 (QLQGGITSITLRGEGHQFFVGTEESHIYRVNFTNFKETLI), 333 to 372 (CHFESVEDIVFPFGTAELFATCAKKDIRVWHTLTNRELLR), 375 to 414 (VPNMTCHGIDFMRDGKSIISAWDDGRIRAFAPETGRLMYV), 418 to 457 (AHRIGVTAIATTSDCKRVISGGGEGEVRVWHIGHQTQKLE), 462 to 501 (EHKSSVSCIRVKKSNEECVTASTDGTCIIWDLVRLRRNQM), 503 to 544 (LANT…RELD), 546 to 585 (SLSGAVNGMDITVEGVHFVTGGNDHLVKVWDYNEGEVTHV), and 588 to 623 (GHSGNITRIRISPGNQYIVSVSADGAILRWKYPFPS).

The protein belongs to the CFAP52 family. As to quaternary structure, microtubule inner protein component of sperm flagellar doublet microtubules. Interacts with BRCA2. Interacts with the CCT chaperonin complex. Interacts with HSP70. Interacts with AK8. Interacts with CFAP45. Interacts with DNAI1. Interacts with IQDC. In terms of tissue distribution, expressed in trachea multiciliated cells.

Its subcellular location is the cytoplasm. The protein resides in the cytoskeleton. It is found in the cilium axoneme. The protein localises to the flagellum axoneme. Functionally, microtubule inner protein (MIP) part of the dynein-decorated doublet microtubules (DMTs) in cilia axoneme. Important for proper ciliary and flagellar beating. May act in cooperation with CFAP45 and axonemal dynein subunit DNAH11. May play a role in cell growth and/or survival. The sequence is that of Cilia- and flagella-associated protein 52 (CFAP52) from Bos taurus (Bovine).